A 343-amino-acid chain; its full sequence is Phenylalanine--tRNA ligase alpha subunit (343 aa).

Mg(2+) is bound at residue glutamate 264.

Belongs to the class-II aminoacyl-tRNA synthetase family. Phe-tRNA synthetase alpha subunit type 1 subfamily. In terms of assembly, tetramer of two alpha and two beta subunits. The cofactor is Mg(2+).

It is found in the cytoplasm. The catalysed reaction is tRNA(Phe) + L-phenylalanine + ATP = L-phenylalanyl-tRNA(Phe) + AMP + diphosphate + H(+). The sequence is that of Phenylalanine--tRNA ligase alpha subunit from Azoarcus sp. (strain BH72).